Consider the following 107-residue polypeptide: Toluene 1,2-dioxygenase system ferredoxin subunit (107 aa).

The Rieske domain maps to 4–99; the sequence is TYILRQGDLP…IKVEGDEVHV (96 aa). C43, H45, C62, and H65 together coordinate [2Fe-2S] cluster.

This sequence belongs to the bacterial ring-hydroxylating dioxygenase ferredoxin component family. In terms of assembly, this dioxygenase system consists of four proteins: the two subunits of the hydroxylase component (todC1 and todC2), a ferredoxin (TodB) and a ferredoxin reductase (TodA).

The protein operates within xenobiotic degradation; toluene degradation. Functionally, this protein seems to be a 2Fe-2S ferredoxin. This is Toluene 1,2-dioxygenase system ferredoxin subunit (todB) from Pseudomonas putida (strain ATCC 700007 / DSM 6899 / JCM 31910 / BCRC 17059 / LMG 24140 / F1).